The following is a 512-amino-acid chain: DNA-binding protein (512 aa).

The tract at residues 1 to 105 (MAGRGGSQLE…QDSEDEREAE (105 aa)) is disordered. Over residues 9–21 (LERRRERTPDRGR) the composition is skewed to basic and acidic residues. Residues 69–78 (QEQPPPPQQP) show a composition bias toward pro residues. Positions 79 to 88 (PKKKPRKTKH) are enriched in basic residues. The segment covering 96–105 (QDSEDEREAE) has biased composition (acidic residues). The residue at position 174 (Tyr174) is a Phosphotyrosine; by host. Residues Cys263 and His265 each contribute to the Zn(2+) site. The tract at residues 276–310 (IEMDVASENGQRALKENPDRAKVTQNRWGRSVVQL) is flexible loop. Positions 318, 334, 376, 378, 430, and 447 each coordinate Zn(2+). Residues 495–512 (VSLPAGHAETSRQNPFDF) form a C-terminal arm, DBP binding region.

It belongs to the adenoviridae E2A DNA-binding protein family. Homomultimerizes on viral ssDNA bound to pTP. Forms a initiation complex with viral polymerase, pTP and hosts NFIA and POU2F1/OCT1. Interacts with host SRCAP.

The protein resides in the host nucleus. In terms of biological role, plays a role in the elongation phase of viral strand displacement replication by unwinding the template in an ATP-independent fashion, employing its capacity to form multimers. Also enhances the rate of initiation. Released from template upon second strand synthesis. Assembles in complex with viral pTP, viral pol, host NFIA and host POU2F1/OCT1 on viral origin of replication. Covers the whole ssDNA genome during synthesis. The complementary strand synthesis induces its relese from DNA template. May inhibit cellular transcription mediated by the interaction between host SRCAP and CBP. In Homo sapiens (Human), this protein is DNA-binding protein.